The sequence spans 141 residues: Hemoglobin subunit alpha (141 aa).

The Globin domain maps to Val1–Arg141. Ser3 is subject to Phosphoserine. N6-succinyllysine is present on residues Lys7 and Lys11. Lys16 carries the N6-acetyllysine; alternate modification. Residue Lys16 is modified to N6-succinyllysine; alternate. Tyr24 is subject to Phosphotyrosine. Ser35 carries the phosphoserine modification. Position 40 is an N6-succinyllysine (Lys40). Ser49 is modified (phosphoserine). His58 serves as a coordination point for O2. His87 serves as a coordination point for heme b. The residue at position 102 (Ser102) is a Phosphoserine. Thr108 bears the Phosphothreonine mark. Residues Ser124 and Ser131 each carry the phosphoserine modification. A phosphothreonine mark is found at Thr134 and Thr137. Ser138 bears the Phosphoserine mark.

Belongs to the globin family. In terms of assembly, heterotetramer of two alpha chains and two beta chains. Red blood cells.

Its function is as follows. Involved in oxygen transport from the lung to the various peripheral tissues. In terms of biological role, hemopressin acts as an antagonist peptide of the cannabinoid receptor CNR1. Hemopressin-binding efficiently blocks cannabinoid receptor CNR1 and subsequent signaling. This Suncus murinus (Asian house shrew) protein is Hemoglobin subunit alpha (HBA).